We begin with the raw amino-acid sequence, 153 residues long: MNKKRAKGNSHSIRPVRSGPPKWVRFTREEVELLVEELAKRGYPPSMIGMVLRDQYGVPLVKQITGRKLTAILQDRNMKPKIPEDLFNLMRRAVNIRRHLFEYPKDKSAKRGLEEVESKIRRLASYYKETGKLPQEWSYDPAKAELLVTGSLY.

This sequence belongs to the universal ribosomal protein uS15 family. As to quaternary structure, part of the 30S ribosomal subunit.

The chain is Small ribosomal subunit protein uS15 from Sulfolobus acidocaldarius (strain ATCC 33909 / DSM 639 / JCM 8929 / NBRC 15157 / NCIMB 11770).